Here is a 180-residue protein sequence, read N- to C-terminus: Large ribosomal subunit protein uL6 (180 aa).

This sequence belongs to the universal ribosomal protein uL6 family. In terms of assembly, part of the 50S ribosomal subunit.

In terms of biological role, this protein binds to the 23S rRNA, and is important in its secondary structure. It is located near the subunit interface in the base of the L7/L12 stalk, and near the tRNA binding site of the peptidyltransferase center. This Thermoanaerobacter sp. (strain X514) protein is Large ribosomal subunit protein uL6.